We begin with the raw amino-acid sequence, 353 residues long: Nicotinate-nucleotide--dimethylbenzimidazole phosphoribosyltransferase (353 aa).

The Proton acceptor role is filled by glutamate 320.

It belongs to the CobT family.

It carries out the reaction 5,6-dimethylbenzimidazole + nicotinate beta-D-ribonucleotide = alpha-ribazole 5'-phosphate + nicotinate + H(+). It functions in the pathway nucleoside biosynthesis; alpha-ribazole biosynthesis; alpha-ribazole from 5,6-dimethylbenzimidazole: step 1/2. Its function is as follows. Catalyzes the synthesis of alpha-ribazole-5'-phosphate from nicotinate mononucleotide (NAMN) and 5,6-dimethylbenzimidazole (DMB). The sequence is that of Nicotinate-nucleotide--dimethylbenzimidazole phosphoribosyltransferase from Syntrophotalea carbinolica (strain DSM 2380 / NBRC 103641 / GraBd1) (Pelobacter carbinolicus).